The primary structure comprises 416 residues: Multifunctional CCA protein (416 aa).

G8 and R11 together coordinate ATP. Positions 8 and 11 each coordinate CTP. Positions 21 and 23 each coordinate Mg(2+). Residues R91, R137, and R140 each coordinate ATP. CTP-binding residues include R91, R137, and R140. In terms of domain architecture, HD spans T228–W329.

The protein belongs to the tRNA nucleotidyltransferase/poly(A) polymerase family. Bacterial CCA-adding enzyme type 1 subfamily. In terms of assembly, monomer. Can also form homodimers and oligomers. Mg(2+) serves as cofactor. Requires Ni(2+) as cofactor.

It carries out the reaction a tRNA precursor + 2 CTP + ATP = a tRNA with a 3' CCA end + 3 diphosphate. The catalysed reaction is a tRNA with a 3' CCA end + 2 CTP + ATP = a tRNA with a 3' CCACCA end + 3 diphosphate. Functionally, catalyzes the addition and repair of the essential 3'-terminal CCA sequence in tRNAs without using a nucleic acid template. Adds these three nucleotides in the order of C, C, and A to the tRNA nucleotide-73, using CTP and ATP as substrates and producing inorganic pyrophosphate. tRNA 3'-terminal CCA addition is required both for tRNA processing and repair. Also involved in tRNA surveillance by mediating tandem CCA addition to generate a CCACCA at the 3' terminus of unstable tRNAs. While stable tRNAs receive only 3'-terminal CCA, unstable tRNAs are marked with CCACCA and rapidly degraded. This is Multifunctional CCA protein from Shewanella sp. (strain ANA-3).